We begin with the raw amino-acid sequence, 146 residues long: Angiogenin (146 aa).

The first 24 residues, 1-24 (MVMGPHLLLLVFILGLGLTPPTLA), serve as a signal peptide directing secretion. The residue at position 25 (glutamine 25) is a Pyrrolidone carboxylic acid. The active-site Proton acceptor is histidine 37. Intrachain disulfides connect cysteine 50/cysteine 105, cysteine 63/cysteine 116, and cysteine 81/cysteine 131. A Nucleolar localization signal motif is present at residues 55-59 (RLRNM). The tRNA site is built by cysteine 105 and isoleucine 127. Catalysis depends on histidine 138, which acts as the Proton donor.

This sequence belongs to the pancreatic ribonuclease family. In terms of assembly, homodimer. Interacts with RNH1; inhibiting ANG ribonuclease activity. Interacts with PCNA.

Its subcellular location is the secreted. The protein resides in the nucleus. The protein localises to the nucleolus. It localises to the cytoplasm. It is found in the stress granule. Its activity is regulated as follows. Has weak tRNA ribonuclease activity by itself due to partial autoinhibition by its C-terminus, which folds into a short alpha-helix that partially occludes the substrate-binding site. In absence of stress, the ribonuclease activity is inhibited by RNH1 in the cytoplasm. In response to stress, dissociates from RNH1 in the cytoplasm and associates with cytoplasmic ribosomes with vacant A-sites: ribosomes directly activate the tRNA ribonuclease activity of ANG by refolding the C-terminal alpha-helix. In response to stress, the angiogenic activity of ANG is inhibited by RNH1 in the nucleus. Its function is as follows. Secreted ribonuclease that can either promote or restrict cell proliferation of target cells, depending on the context. Endocytosed in target cells via its receptor PLXNB2 and translocates to the cytoplasm or nucleus. Under stress conditions, localizes to the cytoplasm and promotes the assembly of stress granules (SGs): specifically cleaves a subset of tRNAs within anticodon loops to produce tRNA-derived stress-induced fragments (tiRNAs), resulting in translation repression and inhibition of cell proliferation. tiRNas also prevent formation of apoptosome, thereby promoting cell survival. Preferentially cleaves RNAs between a pyrimidine and an adenosine residue, suggesting that it cleaves the anticodon loop of tRNA(Ala) (32-UUAGCAU-38) after positions 33 and 36. Cleaves a subset of tRNAs, including tRNA(Ala), tRNA(Glu), tRNA(Gly), tRNA(Lys), tRNA(Val), tRNA(His), tRNA(Asp) and tRNA(Sec). Under growth conditions and in differentiated cells, translocates to the nucleus and stimulates ribosomal RNA (rRNA) transcription, including that containing the initiation site sequences of 45S rRNA, thereby promoting cell growth and proliferation. Angiogenin induces vascularization of normal and malignant tissues via its ability to promote rRNA transcription. Involved in hematopoietic stem and progenitor cell (HSPC) growth and survival by promoting rRNA transcription in growth conditions and inhibiting translation in response to stress, respectively. Mediates the crosstalk between myeloid and intestinal epithelial cells to protect the intestinal epithelial barrier integrity: secreted by myeloid cells and promotes intestinal epithelial cells proliferation and survival. Also mediates osteoclast-endothelial cell crosstalk in growing bone: produced by osteoclasts and protects the neighboring vascular cells against senescence by promoting rRNA transcription. The protein is Angiogenin (ANG) of Saimiri sciureus (Common squirrel monkey).